The chain runs to 1072 residues: Zn(2)-C6 fungal-type transcription factor FTF2 (1072 aa).

Residues 179–206 (CIACRRKKIRCSGEKPACKHCLRSRIPC) constitute a DNA-binding region (zn(2)-C6 fungal-type).

It is found in the nucleus. Functionally, zn(2)-C6 fungal-type transcription factor that has a role in conidia production and also in plant colonization. Acts as a negative regulator of the production of macroconidia and is required for full virulence and the positive regulation of SIX effectors. In addition, FTF2 is also involved in the regulation of class II hydrophobins FOXG_02746 and FOXG_02748 likely required for plant colonization. The sequence is that of Zn(2)-C6 fungal-type transcription factor FTF2 from Fusarium oxysporum f. sp. lycopersici (strain 4287 / CBS 123668 / FGSC 9935 / NRRL 34936) (Fusarium vascular wilt of tomato).